The sequence spans 471 residues: Ribulose bisphosphate carboxylase large chain (471 aa).

Residues N119 and T169 each contribute to the substrate site. K171 (proton acceptor) is an active-site residue. K173 lines the substrate pocket. Residues K197, D199, and E200 each contribute to the Mg(2+) site. An N6-carboxylysine modification is found at K197. H290 functions as the Proton acceptor in the catalytic mechanism. Substrate is bound by residues R291, H323, and S375.

It belongs to the RuBisCO large chain family. Type I subfamily. As to quaternary structure, heterohexadecamer of 8 large chains and 8 small chains; disulfide-linked. The disulfide link is formed within the large subunit homodimers. Mg(2+) is required as a cofactor. Post-translationally, the disulfide bond which can form in the large chain dimeric partners within the hexadecamer appears to be associated with oxidative stress and protein turnover.

It localises to the carboxysome. The catalysed reaction is 2 (2R)-3-phosphoglycerate + 2 H(+) = D-ribulose 1,5-bisphosphate + CO2 + H2O. It carries out the reaction D-ribulose 1,5-bisphosphate + O2 = 2-phosphoglycolate + (2R)-3-phosphoglycerate + 2 H(+). In terms of biological role, ruBisCO catalyzes two reactions: the carboxylation of D-ribulose 1,5-bisphosphate, the primary event in carbon dioxide fixation, as well as the oxidative fragmentation of the pentose substrate in the photorespiration process. Both reactions occur simultaneously and in competition at the same active site. This is Ribulose bisphosphate carboxylase large chain from Crocosphaera subtropica (strain ATCC 51142 / BH68) (Cyanothece sp. (strain ATCC 51142)).